The chain runs to 239 residues: Phosphoribosylaminoimidazole-succinocarboxamide synthase (239 aa).

The protein belongs to the SAICAR synthetase family.

It catalyses the reaction 5-amino-1-(5-phospho-D-ribosyl)imidazole-4-carboxylate + L-aspartate + ATP = (2S)-2-[5-amino-1-(5-phospho-beta-D-ribosyl)imidazole-4-carboxamido]succinate + ADP + phosphate + 2 H(+). The protein operates within purine metabolism; IMP biosynthesis via de novo pathway; 5-amino-1-(5-phospho-D-ribosyl)imidazole-4-carboxamide from 5-amino-1-(5-phospho-D-ribosyl)imidazole-4-carboxylate: step 1/2. The polypeptide is Phosphoribosylaminoimidazole-succinocarboxamide synthase (Psychrobacter sp. (strain PRwf-1)).